The primary structure comprises 180 residues: ATP synthase subunit delta (180 aa).

Belongs to the ATPase delta chain family. As to quaternary structure, F-type ATPases have 2 components, F(1) - the catalytic core - and F(0) - the membrane proton channel. F(1) has five subunits: alpha(3), beta(3), gamma(1), delta(1), epsilon(1). F(0) has three main subunits: a(1), b(2) and c(10-14). The alpha and beta chains form an alternating ring which encloses part of the gamma chain. F(1) is attached to F(0) by a central stalk formed by the gamma and epsilon chains, while a peripheral stalk is formed by the delta and b chains.

The protein localises to the cell inner membrane. Functionally, f(1)F(0) ATP synthase produces ATP from ADP in the presence of a proton or sodium gradient. F-type ATPases consist of two structural domains, F(1) containing the extramembraneous catalytic core and F(0) containing the membrane proton channel, linked together by a central stalk and a peripheral stalk. During catalysis, ATP synthesis in the catalytic domain of F(1) is coupled via a rotary mechanism of the central stalk subunits to proton translocation. This protein is part of the stalk that links CF(0) to CF(1). It either transmits conformational changes from CF(0) to CF(1) or is implicated in proton conduction. The protein is ATP synthase subunit delta of Cupriavidus metallidurans (strain ATCC 43123 / DSM 2839 / NBRC 102507 / CH34) (Ralstonia metallidurans).